The sequence spans 227 residues: MKKKSISLLYLISIVFLPWCISFTFKKSLESWFINWWNTSQSEIFLNDIKEKSILKKFIELKELFFLDDMLKECPKTYLQNLRTGIYKETIQLIKTHNEDRMNTILHFSTNIICFFILSGYSILGNQELILINSLVREFIYNLSDTIKAFSILLLTDLCIGFHSTRGWELIMGFVSKDFGFAQNDQIISGLVSTFPVILDTIFKYWIFRYLNRISPSLVVIYHSMND.

4 helical membrane-spanning segments follow: residues 5–25, 112–132, 143–163, and 187–207; these read SISL…SFTF, IICF…LILI, LSDT…IGFH, and IISG…KYWI.

The protein belongs to the CemA family.

It is found in the plastid. The protein resides in the chloroplast inner membrane. It catalyses the reaction K(+)(in) + H(+)(out) = K(+)(out) + H(+)(in). Functionally, contributes to K(+)/H(+) antiport activity by supporting proton efflux to control proton extrusion and homeostasis in chloroplasts in a light-dependent manner to modulate photosynthesis. Prevents excessive induction of non-photochemical quenching (NPQ) under continuous-light conditions. Indirectly promotes efficient inorganic carbon uptake into chloroplasts. In Phaseolus vulgaris (Kidney bean), this protein is Potassium/proton antiporter CemA.